Reading from the N-terminus, the 67-residue chain is uncharacterized protein (67 aa).

This is an uncharacterized protein from Saccharomyces cerevisiae (strain ATCC 204508 / S288c) (Baker's yeast).